A 210-amino-acid chain; its full sequence is Somatotropin-2 (210 aa).

An N-terminal signal peptide occupies residues 1–22 (MARALVLLSVVLVSLLVNQGRA). Position 38 (His38) interacts with Zn(2+). Cys71 and Cys183 are oxidised to a cystine. Residue Glu192 coordinates Zn(2+). A disulfide bridge links Cys200 with Cys208.

Belongs to the somatotropin/prolactin family.

The protein resides in the secreted. In terms of biological role, growth hormone plays an important role in growth control and is involved in the regulation of several anabolic processes. Implicated as an osmoregulatory substance important for seawater adaptation. The protein is Somatotropin-2 (gh2) of Carassius auratus (Goldfish).